We begin with the raw amino-acid sequence, 393 residues long: NAD(P)H-quinone oxidoreductase subunit H, chloroplastic (393 aa).

This sequence belongs to the complex I 49 kDa subunit family. In terms of assembly, NDH is composed of at least 16 different subunits, 5 of which are encoded in the nucleus.

The protein resides in the plastid. It localises to the chloroplast thylakoid membrane. It carries out the reaction a plastoquinone + NADH + (n+1) H(+)(in) = a plastoquinol + NAD(+) + n H(+)(out). The catalysed reaction is a plastoquinone + NADPH + (n+1) H(+)(in) = a plastoquinol + NADP(+) + n H(+)(out). In terms of biological role, NDH shuttles electrons from NAD(P)H:plastoquinone, via FMN and iron-sulfur (Fe-S) centers, to quinones in the photosynthetic chain and possibly in a chloroplast respiratory chain. The immediate electron acceptor for the enzyme in this species is believed to be plastoquinone. Couples the redox reaction to proton translocation, and thus conserves the redox energy in a proton gradient. This chain is NAD(P)H-quinone oxidoreductase subunit H, chloroplastic, found in Zea mays (Maize).